The primary structure comprises 298 residues: Protein pxr1 (298 aa).

Basic residues predominate over residues 1–11 (MGLAAPRKRTK). The disordered stretch occupies residues 1-23 (MGLAAPRKRTKISHDPNNTNWAR). The G-patch domain occupies 25–79 (TSGFGHKILSSQGWTPGSFLGARDAAHADMFTAASAGHIRVVVKDDTLGLGARAG). Positions 145-274 (LPERESVQQS…RPLGRQIVRG (130 aa)) are disordered. A compositionally biased stretch (polar residues) spans 151 to 164 (VQQSRAAVETSDSN). A compositionally biased stretch (basic residues) spans 199–222 (REKKEKKDKKEKKEKKDKKDKKRK). A compositionally biased stretch (polar residues) spans 247 to 256 (GLESDSTSVS).

Belongs to the PINX1 family.

The protein localises to the nucleus. It is found in the nucleolus. Functionally, involved in rRNA-processing at A0, A1 and A2 sites and negatively regulates telomerase. The protein is Protein pxr1 (pxr1) of Aspergillus terreus (strain NIH 2624 / FGSC A1156).